The sequence spans 285 residues: MTTNDTWFTEHFQTTGSAIGFRVTGKLDEVQSPFQKIEIYNSTDWGKLMVIDGALMLTSRDNFLYHEMISHPALFTHTAPKCVVIIGGGDCGTLREVLKHPDIEQVTQCDIDEQVTRMAEKHFPELCTSNNDPRATLLFSDGVAYMADCPTNSVDVIIVDSTDPVGPAKGLFNRTFYESCFRALKNDGLLIQQSESPLALLELIKEMRHEMSKAGFKAFKTLPFPQPCYPTGWWSVTLSSKQPNANFAFRQTDAQTKPFDTLYYNAHLHHGVLVPPPFIAHALGE.

The PABS domain maps to Asp5–Lys241. Gln35 contributes to the S-methyl-5'-thioadenosine binding site. Spermidine is bound by residues His66 and Asp90. S-methyl-5'-thioadenosine contacts are provided by residues Asp110 and Asp141–Gly142. Residue Asp160 is the Proton acceptor of the active site. Spermidine is bound at residue Asp160 to Asp163. Pro167 is a binding site for S-methyl-5'-thioadenosine.

Belongs to the spermidine/spermine synthase family. As to quaternary structure, homodimer or homotetramer.

The protein resides in the cytoplasm. It carries out the reaction S-adenosyl 3-(methylsulfanyl)propylamine + putrescine = S-methyl-5'-thioadenosine + spermidine + H(+). It functions in the pathway amine and polyamine biosynthesis; spermidine biosynthesis; spermidine from putrescine: step 1/1. Catalyzes the irreversible transfer of a propylamine group from the amino donor S-adenosylmethioninamine (decarboxy-AdoMet) to putrescine (1,4-diaminobutane) to yield spermidine. The chain is Polyamine aminopropyltransferase from Xylella fastidiosa (strain Temecula1 / ATCC 700964).